An 806-amino-acid polypeptide reads, in one-letter code: DEP domain-containing protein 1A (806 aa).

A DEP domain is found at 24–108 (FRAAMPLRKH…DNNSLYRFPS (85 aa)). Residues 142–177 (QFSKKTPKRRASVDSKEEQENEDLMEDQRNDDDFPK) form a disordered region. Residues 167–177 (EDQRNDDDFPK) are compositionally biased toward basic and acidic residues. One can recognise a Rho-GAP domain in the interval 279–319 (DYFLNLPEPLLTFEFYELFVNILVVCGYITVPNSHNGKHRF). Positions 564–588 (SHSSFPSTSSLLPPTTSPNSTGSES) are disordered.

The protein is DEP domain-containing protein 1A (depdc1a) of Xenopus laevis (African clawed frog).